We begin with the raw amino-acid sequence, 710 residues long: MSDSQENKPVETPTEVKPVAEKKPAAEKKEKKPAVKKVGVMETLQTPDYVKERIEIWESLKAKHLESLKDMKEEPINVTLPDGKVVAGIKNKTTPYDIAKGISRGLADSIVSSKVNGEQIWDISRPLEADCNLQLCKFDSEEGKKTFWHSSAHILGQAMERIYGGQLCIGPATSEGFYYDMAMGDKIVSAEDYKLINEVAQKIVQEKQPFERLAVPRDIALTMFKFNKYKTEIISKIPQEDTVSLYRCGTLVDLCRGPHVPNTSYIKSFAVTKNSSAYWLGKAENDDLQRVYGISFPDKKQMEEYENFMREAALRDHRNVGKAQELFFFHPYSPGSAFFLPHGTRIYNKLVEFIREEYHRRGFTEVISPSIFSQKLWEQSGHWQKYSENMFVLPVDKDNFSLKPMNCPGHCLMFGSRQRSYRELPLRFADFGVLHRNELAGALTGLTRVRKFQQDDAHIFCTTEMIEDEINSCLGFMQYVYGIFGFEFGLELSTRPDNFLGEIAQWDIAEASLEKALNKFGKPWKLNPKDGAFYGPKIDIHITDCLKRSHQCATIQLDFQLPIRFDLEYQSDDAAELKKRPVIIHRAILGSVERMMAILIEHTGGKWPLWVSPRQAIVVTVNKTHNEYGQKVCKEISDAGFYCDIDDSDKTISKKVREAQLAQYNYILVVGQEEINGNTVNVRTRDNVVRGSLTVNDLISEFKQLVKEFK.

The disordered stretch occupies residues 1–35 (MSDSQENKPVETPTEVKPVAEKKPAAEKKEKKPAV). A compositionally biased stretch (basic and acidic residues) spans 18–33 (PVAEKKPAAEKKEKKP). The 66-residue stretch at 72–137 (KEEPINVTLP…EADCNLQLCK (66 aa)) folds into the TGS domain.

This sequence belongs to the class-II aminoacyl-tRNA synthetase family.

It is found in the cytoplasm. It catalyses the reaction tRNA(Thr) + L-threonine + ATP = L-threonyl-tRNA(Thr) + AMP + diphosphate + H(+). This is Probable threonine--tRNA ligase 1, cytoplasmic (thrS1) from Dictyostelium discoideum (Social amoeba).